Consider the following 366-residue polypeptide: 3-isopropylmalate dehydrogenase (366 aa).

78 to 91 (GPQWTHLKGSESPE) serves as a coordination point for NAD(+). Substrate is bound by residues R99, R109, R138, and D227. The Mg(2+) site is built by D227, D251, and D255. 285–297 (GSAPDIAEKNIAN) is a binding site for NAD(+).

This sequence belongs to the isocitrate and isopropylmalate dehydrogenases family. LeuB type 1 subfamily. In terms of assembly, homodimer. Mg(2+) is required as a cofactor. Mn(2+) serves as cofactor.

It is found in the cytoplasm. The enzyme catalyses (2R,3S)-3-isopropylmalate + NAD(+) = 4-methyl-2-oxopentanoate + CO2 + NADH. The protein operates within amino-acid biosynthesis; L-leucine biosynthesis; L-leucine from 3-methyl-2-oxobutanoate: step 3/4. Its function is as follows. Catalyzes the oxidation of 3-carboxy-2-hydroxy-4-methylpentanoate (3-isopropylmalate) to 3-carboxy-4-methyl-2-oxopentanoate. The product decarboxylates to 4-methyl-2 oxopentanoate. This Blochmanniella pennsylvanica (strain BPEN) protein is 3-isopropylmalate dehydrogenase.